A 259-amino-acid chain; its full sequence is Phosphatidate cytidylyltransferase (259 aa).

The next 7 helical transmembrane spans lie at 31-51, 69-89, 103-123, 129-149, 170-190, 193-213, and 236-256; these read LVIFLPKSLFLLVILFLCFAI, PLVLLTYYFADPLVFPLIGLL, FFKSTFLLFYPALFLVYLIKI, YYLLIFIFGIWINDVFAYYIG, FLGGVLFGSLFFALTLPYGIL, FLLGTFVLTVGVAGDYFKSFI, and FDALVFSAPVFYLIMCAGELN.

This sequence belongs to the CDS family.

It is found in the cell membrane. The catalysed reaction is a 1,2-diacyl-sn-glycero-3-phosphate + CTP + H(+) = a CDP-1,2-diacyl-sn-glycerol + diphosphate. Its pathway is phospholipid metabolism; CDP-diacylglycerol biosynthesis; CDP-diacylglycerol from sn-glycerol 3-phosphate: step 3/3. In Aquifex aeolicus (strain VF5), this protein is Phosphatidate cytidylyltransferase (cdsA).